The following is a 266-amino-acid chain: Glutaconate CoA-transferase subunit B (266 aa).

Residue E54 is part of the active site.

Belongs to the 3-oxoacid CoA-transferase subunit B family. In terms of assembly, heterooctamer of four A and four B subunits.

Its subcellular location is the cytoplasm. The catalysed reaction is trans-glutaconate + acetyl-CoA = (2E)-glutaconyl-CoA + acetate. The protein operates within amino-acid degradation; L-glutamate degradation via hydroxyglutarate pathway; crotonoyl-CoA from L-glutamate: step 3/5. Functionally, catalyzes the transfer of the CoA moiety from acetyl-CoA to (R)-2-hydroxyglutarate and related compounds like glutaconate. This is Glutaconate CoA-transferase subunit B (gctB) from Acidaminococcus fermentans (strain ATCC 25085 / DSM 20731 / CCUG 9996 / CIP 106432 / VR4).